Here is a 130-residue protein sequence, read N- to C-terminus: Small ribosomal subunit protein uS8 (130 aa).

It belongs to the universal ribosomal protein uS8 family. In terms of assembly, part of the 30S ribosomal subunit. Contacts proteins S5 and S12.

Its function is as follows. One of the primary rRNA binding proteins, it binds directly to 16S rRNA central domain where it helps coordinate assembly of the platform of the 30S subunit. The protein is Small ribosomal subunit protein uS8 of Haemophilus influenzae (strain 86-028NP).